Here is a 397-residue protein sequence, read N- to C-terminus: Chorismate synthase (397 aa).

Residues Arg40 and Arg46 each coordinate NADP(+). FMN is bound by residues 129 to 131 (RSS), 257 to 258 (QA), Gly302, 317 to 321 (KPISS), and Arg343.

It belongs to the chorismate synthase family. In terms of assembly, homotetramer. The cofactor is FMNH2.

It carries out the reaction 5-O-(1-carboxyvinyl)-3-phosphoshikimate = chorismate + phosphate. The protein operates within metabolic intermediate biosynthesis; chorismate biosynthesis; chorismate from D-erythrose 4-phosphate and phosphoenolpyruvate: step 7/7. Functionally, catalyzes the anti-1,4-elimination of the C-3 phosphate and the C-6 proR hydrogen from 5-enolpyruvylshikimate-3-phosphate (EPSP) to yield chorismate, which is the branch point compound that serves as the starting substrate for the three terminal pathways of aromatic amino acid biosynthesis. This reaction introduces a second double bond into the aromatic ring system. In Pelodictyon phaeoclathratiforme (strain DSM 5477 / BU-1), this protein is Chorismate synthase.